A 166-amino-acid polypeptide reads, in one-letter code: Lipoprotein signal peptidase (166 aa).

The next 3 helical transmembrane spans lie at 12–32, 70–90, and 102–122; these read WLWV…LILQ, WFFS…MYRS, and ALII…GFVV. Catalysis depends on residues aspartate 123 and aspartate 141. Residues 137 to 157 form a helical membrane-spanning segment; it reads FNLADSAICIGAALIVLEGFL.

Belongs to the peptidase A8 family.

The protein localises to the cell inner membrane. The catalysed reaction is Release of signal peptides from bacterial membrane prolipoproteins. Hydrolyzes -Xaa-Yaa-Zaa-|-(S,diacylglyceryl)Cys-, in which Xaa is hydrophobic (preferably Leu), and Yaa (Ala or Ser) and Zaa (Gly or Ala) have small, neutral side chains.. The protein operates within protein modification; lipoprotein biosynthesis (signal peptide cleavage). Its function is as follows. This protein specifically catalyzes the removal of signal peptides from prolipoproteins. This is Lipoprotein signal peptidase from Klebsiella pneumoniae (strain 342).